The chain runs to 206 residues: Cytochrome b6-f complex iron-sulfur subunit, chloroplastic (206 aa).

A chloroplast-targeting transit peptide spans methionine 1–alanine 29. The chain crosses the membrane as a helical span at residues isoleucine 48–phenylalanine 68. The region spanning alanine 92 to threonine 188 is the Rieske domain. [2Fe-2S] cluster is bound by residues cysteine 134, histidine 136, cysteine 152, and histidine 155. An intrachain disulfide couples cysteine 139 to cysteine 154.

The protein belongs to the Rieske iron-sulfur protein family. The 4 large subunits of the cytochrome b6-f complex are cytochrome b6, subunit IV (17 kDa polypeptide, petD), cytochrome f and the Rieske protein, while the 4 small subunits are petG, petL, petM and petN. The complex functions as a dimer. [2Fe-2S] cluster serves as cofactor.

The protein resides in the plastid. The protein localises to the chloroplast thylakoid membrane. The enzyme catalyses 2 oxidized [plastocyanin] + a plastoquinol + 2 H(+)(in) = 2 reduced [plastocyanin] + a plastoquinone + 4 H(+)(out). Functionally, component of the cytochrome b6-f complex, which mediates electron transfer between photosystem II (PSII) and photosystem I (PSI), cyclic electron flow around PSI, and state transitions. The chain is Cytochrome b6-f complex iron-sulfur subunit, chloroplastic (petC) from Volvox carteri (Green alga).